The sequence spans 299 residues: Delta-9 desaturase-like 2 protein (299 aa).

A helical membrane pass occupies residues 55–75 (WEAFRFGIILAILTNLCITFS). Residues 77–82 (HRNLTH) carry the Histidine box-1 motif. The Histidine box-2 motif lies at 114-118 (HRFHH). The helical transmembrane segment at 174 to 194 (LVLHILAFWTLIYLWGGLPYL) threads the bilayer. Positions 246 to 250 (HNNHH) match the Histidine box-3 motif. The helical transmembrane segment at 262–282 (WYQLDITWYLIWFFQALGLAT) threads the bilayer.

This sequence belongs to the fatty acid desaturase type 1 family. Requires Fe cation as cofactor.

The protein localises to the endoplasmic reticulum membrane. It participates in lipid metabolism; polyunsaturated fatty acid biosynthesis. This is Delta-9 desaturase-like 2 protein from Arabidopsis thaliana (Mouse-ear cress).